A 323-amino-acid chain; its full sequence is V-type ATP synthase subunit C (323 aa).

It belongs to the V-ATPase V0D/AC39 subunit family.

Its function is as follows. Produces ATP from ADP in the presence of a proton gradient across the membrane. The chain is V-type ATP synthase subunit C from Thermus thermophilus (strain ATCC BAA-163 / DSM 7039 / HB27).